Consider the following 89-residue polypeptide: Alpha-latrotoxin associated low molecular weight protein SGV242-280 (89 aa).

An N-terminal signal peptide occupies residues 1–18; that stretch reads MSKLHFLILLSVIVSVFC.

This sequence belongs to the arthropod CHH/MIH/GIH/VIH hormone family. Expressed by the venom gland.

Its subcellular location is the secreted. May increase the toxicity of alpha-latrotoxin and/or other venom components. Is non-toxic to mice and to the cockroach Periplaneta americana. In Steatoda grossa (False black widow), this protein is Alpha-latrotoxin associated low molecular weight protein SGV242-280.